Reading from the N-terminus, the 647-residue chain is Protein arginine N-methyltransferase 7 (647 aa).

SAM-dependent MTase PRMT-type domains are found at residues 12-332 (EREW…FSLW) and 337-647 (GKDK…SEDS). Residues glutamate 140 and glutamate 149 contribute to the active site.

The protein belongs to the class I-like SAM-binding methyltransferase superfamily. Protein arginine N-methyltransferase family. PRMT7 subfamily.

Arginine methyltransferase that can both catalyze the formation of omega-N monomethylarginine (MMA) and symmetrical dimethylarginine (sDMA). The sequence is that of Protein arginine N-methyltransferase 7 (prmt-7) from Caenorhabditis elegans.